We begin with the raw amino-acid sequence, 334 residues long: MTENSDKVPITMVGPEDVEFCSPPAYTTVTVKPSGSPTRLLKVGAVVLISGAVLLLFGAIGAFYFWKGNDNHIYNVHYSMSINGKLQDGSMEIDAVNNLETFKMGSGAEEAIEVNDFKNGITGIRFAGGEKCYIKAQVKARIPEVGTVTKQSISELEGKIMPANYEENSLIWVAVDQPVKDSSFLSSKILELCGDLPIFWLKPMYPKEIQRERREVVRNSAPSTTRRPHSEPRGNAGPGRLSNGTRPNVQDDAEPFNPDNPYHQQEGESMTFDPRLDHEGICCIECRRSYTHCQKICEPLGGYYPWPYNYQGCRSACRVVMPCSWWVARILGMV.

Residues 46 to 66 (VVLISGAVLLLFGAIGAFYFW) form a helical membrane-spanning segment. Positions 105 to 201 (GSGAEEAIEV…LCGDLPIFWL (97 aa)) constitute a BRICHOS domain. Cys132 and Cys193 are oxidised to a cystine. The propeptide occupies 211–214 (RERR). The disordered stretch occupies residues 212–270 (ERREVVRNSAPSTTRRPHSEPRGNAGPGRLSNGTRPNVQDDAEPFNPDNPYHQQEGESM). N-linked (GlcNAc...) asparagine glycosylation occurs at Asn243. 4 disulfides stabilise this stretch: Cys282–Cys286, Cys283–Cys323, Cys293–Cys317, and Cys297–Cys313.

It belongs to the chondromodulin-1 family. Post-translationally, after cleavage, the post-translationally modified ChM-I is secreted as a glycoprotein. In terms of tissue distribution, detected in the four cardiac valves, valvular interstitial cells and extracellular matrix (at protein level).

Its subcellular location is the secreted. It localises to the extracellular space. The protein localises to the extracellular matrix. It is found in the endomembrane system. Its function is as follows. Bifunctional growth regulator that stimulates the growth of cultured chondrocytes in the presence of basic fibroblast growth factor (FGF) but inhibits the growth of cultured vascular endothelial cells. May contribute to the rapid growth of cartilage and vascular invasion prior to the replacement of cartilage by bone during endochondral bone development. Inhibits in vitro tube formation and mobilization of endothelial cells. Plays a role as antiangiogenic factor in cardiac valves to suppress neovascularization. In Mus musculus (Mouse), this protein is Leukocyte cell-derived chemotaxin 1.